Here is a 344-residue protein sequence, read N- to C-terminus: Anthranilate phosphoribosyltransferase (344 aa).

Residues G80, G83–D84, T88, N90–T93, K108–S116, and S120 each bind 5-phospho-alpha-D-ribose 1-diphosphate. G80 contacts anthranilate. S92 is a Mg(2+) binding site. N111 contacts anthranilate. R166 lines the anthranilate pocket. 2 residues coordinate Mg(2+): D225 and E226.

Belongs to the anthranilate phosphoribosyltransferase family. Homodimer. It depends on Mg(2+) as a cofactor.

The enzyme catalyses N-(5-phospho-beta-D-ribosyl)anthranilate + diphosphate = 5-phospho-alpha-D-ribose 1-diphosphate + anthranilate. It participates in amino-acid biosynthesis; L-tryptophan biosynthesis; L-tryptophan from chorismate: step 2/5. Functionally, catalyzes the transfer of the phosphoribosyl group of 5-phosphorylribose-1-pyrophosphate (PRPP) to anthranilate to yield N-(5'-phosphoribosyl)-anthranilate (PRA). The polypeptide is Anthranilate phosphoribosyltransferase (Petrotoga mobilis (strain DSM 10674 / SJ95)).